The chain runs to 1275 residues: Inner capsid protein lambda-1 (1275 aa).

The span at 1–12 shows a compositional bias: basic residues; sequence MKRIPRKTRGKS. Residues 1–147 are disordered; it reads MKRIPRKTRG…NVDNEGGDNQ (147 aa). Residues 18–35 are compositionally biased toward basic and acidic residues; that stretch reads DSTERADDGSAQLRDKQS. Polar residues predominate over residues 55–66; sequence TRPSLQTVQKAT. Basic and acidic residues-rich tracts occupy residues 80-98 and 105-117; these read AVDK…HVEA and ATKR…DKQK. Residues 118-139 show a composition bias toward polar residues; it reads AQVTYNDTGINNANELSRSGNV. The segment at 181–203 adopts a C2H2-type zinc-finger fold; sequence YQCHVCSAVLFSPLDLDAHVASH.

This sequence belongs to the turreted BTV-fold inner capsid family. Homodecamer; each decamer is made up of two conformers of VP2, called VP2A and VP2B. 12 homodecamers assemble to form an icosahedral capsid. Interacts with protein mu-NS; in viral inclusions. Requires Mg(2+) as cofactor. Mn(2+) is required as a cofactor.

It is found in the virion. The enzyme catalyses ATP + H2O = ADP + phosphate + H(+). Its function is as follows. Inner capsid protein that self-assembles to form an icosahedral capsid with a T=2 symmetry, which consists of 120 copies of VP2, with channels at each of its five-fold vertices. This capsid constitutes the innermost concentric layer of the viral mature particle. Displays NTPase, RNA 5'-triphosphatase (RTPase) and RNA helicase activities and probably participates in transcription of the viral genome. Helicase activity might be involved in unwinding or reannealing dsRNA during RNA synthesis. RTPase enzymatic activity represents the first step in RNA capping, which yields a 5'-diphosphorylated plus-strand RNA. The sequence is that of Inner capsid protein lambda-1 from Reovirus type 2 (strain D5/Jones) (T2J).